A 795-amino-acid chain; its full sequence is Phenylalanine--tRNA ligase beta subunit (795 aa).

The tRNA-binding domain maps to 39-148 (AGSFHGVVVG…ADAPIGTDIR (110 aa)). The 76-residue stretch at 401-476 (PKRATITLRR…RVYGYNNIPD (76 aa)) folds into the B5 domain. The Mg(2+) site is built by D454, D460, E463, and E464. The FDX-ACB domain maps to 701 to 794 (SRFPANRRDI…LKERFQASLR (94 aa)).

This sequence belongs to the phenylalanyl-tRNA synthetase beta subunit family. Type 1 subfamily. In terms of assembly, tetramer of two alpha and two beta subunits. It depends on Mg(2+) as a cofactor.

It is found in the cytoplasm. The catalysed reaction is tRNA(Phe) + L-phenylalanine + ATP = L-phenylalanyl-tRNA(Phe) + AMP + diphosphate + H(+). The protein is Phenylalanine--tRNA ligase beta subunit of Shigella sonnei (strain Ss046).